The primary structure comprises 441 residues: Na(+)/H(+) antiporter NhaA 2 (441 aa).

12 helical membrane passes run 34–54 (VGGAVLLVASAVALVWANSPW), 77–97 (LTLGTWAADGLLAVFFLVVGL), 115–135 (ALPMAAAVGGMVVPALIFVAV), 146–166 (GWAIPTATDIAFAVAVLAVIS), 176–196 (FLLTLAVVDDLLAVTVIAVFY), 199–219 (EINLTALGLSIVPLALFALCV), 225–245 (SWWLLLPLGVATWVLMHESGV), 249–269 (VAGVLLGFTVPVLRSVAAGGP), 290–310 (VAVPVFAFFAAGVAIGGVSGL), 317–337 (PITLGIILGLVVGKPVGIFLT), 355–375 (WIDVFGVALLAGIGFTVSLLI), and 389–409 (FVKVGVLTGSLVAALIAAVLL).

It belongs to the NhaA Na(+)/H(+) (TC 2.A.33) antiporter family.

It is found in the cell membrane. The catalysed reaction is Na(+)(in) + 2 H(+)(out) = Na(+)(out) + 2 H(+)(in). Na(+)/H(+) antiporter that extrudes sodium in exchange for external protons. The polypeptide is Na(+)/H(+) antiporter NhaA 2 (Mycobacterium sp. (strain MCS)).